Here is an 806-residue protein sequence, read N- to C-terminus: DNA topoisomerase 1 (806 aa).

The segment covering 1–15 (MSVVSNHHSNGNGNS) has biased composition (low complexity). The interval 1–236 (MSVVSNHHSN…KKEPPKKKVK (236 aa)) is disordered. Over residues 24–34 (DEIKKEVKDEP) the composition is skewed to basic and acidic residues. Composition is skewed to basic residues over residues 49-60 (RDKKEKKQKKRK) and 98-108 (EKKKSKKNNKK). The segment covering 113–127 (SSEDDDEESEGDVSE) has biased composition (acidic residues). The segment covering 128–137 (EDVKPQIHSD) has biased composition (basic and acidic residues). Acidic residues predominate over residues 138–153 (DELEEEDEAPTTDDEE). The segment covering 159-176 (EKERRKKEKREKKERKEK) has biased composition (basic residues). Residues 177 to 188 (KRLEKENRKIKE) are compositionally biased toward basic and acidic residues. Residues 189–199 (EDDEDSDDEDD) show a composition bias toward acidic residues. Over residues 210–229 (KGAEKSKPSTSKKDAGGKKE) the composition is skewed to basic and acidic residues. Interaction with DNA regions lie at residues 467-468 (KY), 530-535 (RAGNEK), and 634-636 (TVK). Residues 474-803 (SSKIKGEKDF…IDMTNSSDEE (330 aa)) form the Topo IB-type catalytic domain. The active-site O-(3'-phospho-DNA)-tyrosine intermediate is tyrosine 761.

Belongs to the type IB topoisomerase family. Expressed in male germ cells and in mature sperm.

It is found in the nucleus. The protein resides in the nucleolus. It localises to the chromosome. The enzyme catalyses ATP-independent breakage of single-stranded DNA, followed by passage and rejoining.. Its function is as follows. Releases the supercoiling and torsional tension of DNA introduced during the DNA replication and transcription by transiently cleaving and rejoining one strand of the DNA duplex. Introduces a single-strand break via transesterification at a target site in duplex DNA. The scissile phosphodiester is attacked by the catalytic tyrosine of the enzyme, resulting in the formation of a DNA-(3'-phosphotyrosyl)-enzyme intermediate and the expulsion of a 5'-OH DNA strand. The free DNA strand then rotates around the intact phosphodiester bond on the opposing strand, thus removing DNA supercoils. Finally, in the religation step, the DNA 5'-OH attacks the covalent intermediate to expel the active-site tyrosine and restore the DNA phosphodiester backbone. Required for normal spermatogenesis and oogenesis. The chain is DNA topoisomerase 1 (top-1) from Caenorhabditis elegans.